A 705-amino-acid chain; its full sequence is Lethal(3)malignant brain tumor-like protein 2 (705 aa).

The tract at residues 1–84 is disordered; the sequence is MEKPRSIEET…GTPRSLDGSG (84 aa). At Ser-13 the chain carries Phosphoserine. A compositionally biased stretch (acidic residues) spans 15–25; sequence PMEEEEDDDLE. Positions 38 to 49 are enriched in low complexity; it reads SSVGSESSSYLE. A compositionally biased stretch (acidic residues) spans 50-60; the sequence is ESSEAENEDRE. Ser-67 carries the phosphoserine modification. A Phosphothreonine modification is found at Thr-76. The segment at 81–116 adopts an FCS-type zinc-finger fold; the sequence is DGSGSEPAVCEMCGIVGTREAFFSKTKRFCSVSCSR. Residues Cys-90, Cys-93, Cys-110, and Cys-114 each coordinate Zn(2+). 4 MBT repeats span residues 179–283, 291–391, 397–500, and 508–604; these read FDWG…LVPP, TDWK…IKMS, MAHH…LTPP, and FNWE…LQPP. The residue at position 338 (Ser-338) is a Phosphoserine. A Glycyl lysine isopeptide (Lys-Gly) (interchain with G-Cter in SUMO2) cross-link involves residue Lys-405. The segment at 608 to 665 is disordered; sequence EPATPLKAKEATKKKKKQFGKKRKRIPPTKTRPLRQGSKKPLLEDDPQGARKISSEPV. The span at 619–634 shows a compositional bias: basic residues; that stretch reads TKKKKKQFGKKRKRIP. Residues Lys-647, Lys-659, and Lys-675 each participate in a glycyl lysine isopeptide (Lys-Gly) (interchain with G-Cter in SUMO2) cross-link. The tract at residues 680–705 is disordered; sequence DVASPDKASSPELPVSVENIKQETDD. Phosphoserine occurs at positions 683, 688, and 689. A Glycyl lysine isopeptide (Lys-Gly) (interchain with G-Cter in SUMO1); alternate cross-link involves residue Lys-700. Lys-700 participates in a covalent cross-link: Glycyl lysine isopeptide (Lys-Gly) (interchain with G-Cter in SUMO2); alternate.

Part of the E2F6.com-1 complex in G0 phase composed of E2F6, MGA, MAX, TFDP1, CBX3, BAT8, EUHMTASE1, RING1, RNF2, MBLR, BAT8 and YAF2.

The protein resides in the nucleus. Its function is as follows. Putative Polycomb group (PcG) protein. PcG proteins maintain the transcriptionally repressive state of genes, probably via a modification of chromatin, rendering it heritably changed in its expressibility. Its association with a chromatin-remodeling complex suggests that it may contribute to prevent expression of genes that trigger the cell into mitosis. Binds to monomethylated and dimethylated 'Lys-20' on histone H4. Binds histone H3 peptides that are monomethylated or dimethylated on 'Lys-4', 'Lys-9' or 'Lys-27'. This chain is Lethal(3)malignant brain tumor-like protein 2 (L3MBTL2), found in Homo sapiens (Human).